The following is a 661-amino-acid chain: Acetyl-coenzyme A synthetase (661 aa).

CoA-binding positions include 197–200 (RGGK) and T320. ATP is bound by residues 396 to 398 (GEP), 420 to 425 (DTWWQT), D511, and R526. A CoA-binding site is contributed by S534. R537 lines the ATP pocket. Residues V548 and V553 each contribute to the Mg(2+) site. K620 is modified (N6-acetyllysine).

Belongs to the ATP-dependent AMP-binding enzyme family. The cofactor is Mg(2+). Acetylated. Deacetylation by the SIR2-homolog deacetylase activates the enzyme.

The catalysed reaction is acetate + ATP + CoA = acetyl-CoA + AMP + diphosphate. Catalyzes the conversion of acetate into acetyl-CoA (AcCoA), an essential intermediate at the junction of anabolic and catabolic pathways. AcsA undergoes a two-step reaction. In the first half reaction, AcsA combines acetate with ATP to form acetyl-adenylate (AcAMP) intermediate. In the second half reaction, it can then transfer the acetyl group from AcAMP to the sulfhydryl group of CoA, forming the product AcCoA. The sequence is that of Acetyl-coenzyme A synthetase from Leptospira interrogans serogroup Icterohaemorrhagiae serovar copenhageni (strain Fiocruz L1-130).